Here is a 409-residue protein sequence, read N- to C-terminus: Probable beta-1,3-galactosyltransferase 3 (409 aa).

The helical; Signal-anchor for type II membrane protein transmembrane segment at Trp-20–Ile-42 threads the bilayer.

This sequence belongs to the glycosyltransferase 31 family. Mn(2+) is required as a cofactor.

It is found in the golgi apparatus membrane. The protein operates within protein modification; protein glycosylation. Its function is as follows. Beta-1,3-galactosyltransferase that transfers galactose from UDP-galactose to substrates with a terminal glycosyl residue. The polypeptide is Probable beta-1,3-galactosyltransferase 3 (B3GALT3) (Arabidopsis thaliana (Mouse-ear cress)).